A 242-amino-acid chain; its full sequence is MSGCDAREGDCCSRRCGAQDKEHPRYLIPELCKQFYHLGWVTGTGGGISLKHGDEIYIAPSGVQKERIQPEDMFVCDINEKDISGPSPSKKLKKSQCTPLFMNAYTMRGAGAVIHTHSKAAVMATLLFPGREFKITHQEMIKGIKKCTSGGYYRYDDMLVVPIIENTPEEKDLKDRMAHAMNEYPDSCAVLVRRHGVYVWGETWEKAKTMCECYDYLFDIAVSMKKVGLDPSQLPVGENGIV.

Ser87 is modified (phosphoserine). Cys97 is a substrate binding site. His115 and His117 together coordinate Zn(2+). The active-site Proton donor/acceptor is the Glu139. His195 provides a ligand contact to Zn(2+).

The protein belongs to the aldolase class II family. MtnB subfamily. As to quaternary structure, homotetramer. Interacts with APAF1. May interact with CASP1. It depends on Zn(2+) as a cofactor. Isoform 1 is ubiquitously expressed. Isoform 2 is expressed at lower levels and detected in heart, brain, pancreas, liver, placenta, skeletal muscle and kidney.

The protein resides in the cytoplasm. It carries out the reaction 5-(methylsulfanyl)-D-ribulose 1-phosphate = 5-methylsulfanyl-2,3-dioxopentyl phosphate + H2O. It functions in the pathway amino-acid biosynthesis; L-methionine biosynthesis via salvage pathway; L-methionine from S-methyl-5-thio-alpha-D-ribose 1-phosphate: step 2/6. In terms of biological role, catalyzes the dehydration of methylthioribulose-1-phosphate (MTRu-1-P) into 2,3-diketo-5-methylthiopentyl-1-phosphate (DK-MTP-1-P). Functions in the methionine salvage pathway, which plays a key role in cancer, apoptosis, microbial proliferation and inflammation. May inhibit the CASP1-related inflammatory response (pyroptosis), the CASP9-dependent apoptotic pathway and the cytochrome c-dependent and APAF1-mediated cell death. The protein is Methylthioribulose-1-phosphate dehydratase of Homo sapiens (Human).